The following is a 777-amino-acid chain: B3 domain-containing protein REM-like 1 (777 aa).

The TF-B3 1 DNA-binding region spans 97–193; the sequence is FVTFTLAPVD…TPVLSLCFEE (97 aa). Disordered stretches follow at residues 200 to 248 and 344 to 391; these read VGEE…TSPS and KSSS…ESSS. Residues 218 to 243 show a composition bias toward basic and acidic residues; it reads KIVKDDNNKDESSTWKREGNHLRCKD. The TF-B3 2 DNA-binding region spans 252-347; sequence TLTVTITPDS…TPVLSIKSSS (96 aa). The segment covering 344-368 has biased composition (polar residues); it reads KSSSGKGQSEFSKESLSIKPSSGNM. Residues 370–388 show a composition bias toward basic and acidic residues; the sequence is KKVENNREASRKYPPRSRE. 2 consecutive DNA-binding regions (TF-B3) follow at residues 582–676 and 683–777; these read FLTL…RDSS and FLTL…FYTK.

Its subcellular location is the nucleus. This Arabidopsis thaliana (Mouse-ear cress) protein is B3 domain-containing protein REM-like 1.